The chain runs to 453 residues: UDP-N-acetylmuramoylalanine--D-glutamate ligase (453 aa).

120–126 (GSNGKST) lines the ATP pocket.

It belongs to the MurCDEF family.

The protein localises to the cytoplasm. It carries out the reaction UDP-N-acetyl-alpha-D-muramoyl-L-alanine + D-glutamate + ATP = UDP-N-acetyl-alpha-D-muramoyl-L-alanyl-D-glutamate + ADP + phosphate + H(+). It participates in cell wall biogenesis; peptidoglycan biosynthesis. Cell wall formation. Catalyzes the addition of glutamate to the nucleotide precursor UDP-N-acetylmuramoyl-L-alanine (UMA). The polypeptide is UDP-N-acetylmuramoylalanine--D-glutamate ligase (Teredinibacter turnerae (strain ATCC 39867 / T7901)).